A 152-amino-acid chain; its full sequence is Large ribosomal subunit protein bL9 (152 aa).

This sequence belongs to the bacterial ribosomal protein bL9 family.

Functionally, binds to the 23S rRNA. This is Large ribosomal subunit protein bL9 from Acaryochloris marina (strain MBIC 11017).